Here is a 100-residue protein sequence, read N- to C-terminus: Large ribosomal subunit protein uL23 (100 aa).

This sequence belongs to the universal ribosomal protein uL23 family. In terms of assembly, part of the 50S ribosomal subunit. Contacts protein L29, and trigger factor when it is bound to the ribosome.

In terms of biological role, one of the early assembly proteins it binds 23S rRNA. One of the proteins that surrounds the polypeptide exit tunnel on the outside of the ribosome. Forms the main docking site for trigger factor binding to the ribosome. This is Large ribosomal subunit protein uL23 from Corynebacterium aurimucosum (strain ATCC 700975 / DSM 44827 / CIP 107346 / CN-1) (Corynebacterium nigricans).